The chain runs to 402 residues: Subtilisin-like protease 9 (402 aa).

An N-terminal signal peptide occupies residues M1 to P20. Positions S21–D120 are excised as a propeptide. Residues S36–L119 enclose the Inhibitor I9 domain. A Peptidase S8 domain is found at S130–A402. Catalysis depends on charge relay system residues D162 and H193. Residue N254 is glycosylated (N-linked (GlcNAc...) asparagine). S348 acts as the Charge relay system in catalysis. 2 N-linked (GlcNAc...) asparagine glycosylation sites follow: N390 and N398.

It belongs to the peptidase S8 family.

It is found in the secreted. In terms of biological role, secreted subtilisin-like serine protease with keratinolytic activity that contributes to pathogenicity. This Arthroderma benhamiae (strain ATCC MYA-4681 / CBS 112371) (Trichophyton mentagrophytes) protein is Subtilisin-like protease 9 (SUB9).